We begin with the raw amino-acid sequence, 506 residues long: Putative basic amino acid antiporter YfcC (506 aa).

Transmembrane regions (helical) follow at residues 19–39, 107–127, 148–168, 171–191, 208–228, 231–251, 287–307, 310–330, 352–372, 398–418, 419–439, 442–462, and 485–505; these read LVIIFFVAILTSLATWVVPVG, GTAVGIIMFMLVIGGAFGIVM, ILFIPALFILFSLGGAVFGMG, AVAFAIIIAPLMVRLGYDSIT, WMNPFCVVVAQGIAGVPVLSG, LRIVVWVIATLIGLIFTMVYA, WLVLIVLTAVMVWVIWGVIVN, FIPEIASQFFTMGLVIGIIGV, MMIAPALLVGFAKGILLLVGN, AVAAWFMLLFQAVFNFFVTSG, SGQAALTMPLLAPLGDLVGVN, VTVLAFQFGDGFSHIIYPTSA, and LLGLLFIMSSVVVIGAQLMGY.

The protein to H.influenzae HI_0594. To B.subtilis YcgA.

It is found in the cell inner membrane. Its function is as follows. Metabolomic profiling of different yfcC over-expression and deletion strains suggests that it may affect the glyoxylate shunt. The protein is Putative basic amino acid antiporter YfcC (yfcC) of Escherichia coli (strain K12).